Consider the following 396-residue polypeptide: L-lactate dehydrogenase (396 aa).

Positions 1 to 380 (MIISAASDYR…SGDSLVQELG (380 aa)) constitute an FMN hydroxy acid dehydrogenase domain. Tyr24 is a substrate binding site. Positions 106 and 127 each coordinate FMN. Position 129 (Tyr129) interacts with substrate. Thr155 contacts FMN. Residue Arg164 coordinates substrate. Lys251 provides a ligand contact to FMN. His275 functions as the Proton acceptor in the catalytic mechanism. Arg278 contributes to the substrate binding site. 306–330 (DSGIRNGLDVVRMIALGADTVLLGR) provides a ligand contact to FMN.

This sequence belongs to the FMN-dependent alpha-hydroxy acid dehydrogenase family. It depends on FMN as a cofactor.

The protein resides in the cell inner membrane. It catalyses the reaction (S)-lactate + A = pyruvate + AH2. In terms of biological role, catalyzes the conversion of L-lactate to pyruvate. Is coupled to the respiratory chain. This Salmonella paratyphi B (strain ATCC BAA-1250 / SPB7) protein is L-lactate dehydrogenase.